A 201-amino-acid polypeptide reads, in one-letter code: ATP-dependent Clp protease proteolytic subunit (201 aa).

Serine 101 functions as the Nucleophile in the catalytic mechanism. Histidine 126 is a catalytic residue.

It belongs to the peptidase S14 family. In terms of assembly, component of the chloroplastic Clp protease core complex.

It localises to the plastid. It is found in the chloroplast stroma. The catalysed reaction is Hydrolysis of proteins to small peptides in the presence of ATP and magnesium. alpha-casein is the usual test substrate. In the absence of ATP, only oligopeptides shorter than five residues are hydrolyzed (such as succinyl-Leu-Tyr-|-NHMec, and Leu-Tyr-Leu-|-Tyr-Trp, in which cleavage of the -Tyr-|-Leu- and -Tyr-|-Trp bonds also occurs).. Its function is as follows. Cleaves peptides in various proteins in a process that requires ATP hydrolysis. Has a chymotrypsin-like activity. Plays a major role in the degradation of misfolded proteins. The protein is ATP-dependent Clp protease proteolytic subunit of Chaetosphaeridium globosum (Charophycean green alga).